Here is a 58-residue protein sequence, read N- to C-terminus: Large ribosomal subunit protein eL24 (58 aa).

Zn(2+)-binding residues include C6, C9, C32, and C36. The C4-type zinc-finger motif lies at 6 to 36; sequence CSFCGYDIEPGTGKMYVRRDGRVFYFCSGKC.

It belongs to the eukaryotic ribosomal protein eL24 family. In terms of assembly, part of the 50S ribosomal subunit. Forms a cluster with proteins L3 and L14. The cofactor is Zn(2+).

Binds to the 23S rRNA. This Archaeoglobus fulgidus (strain ATCC 49558 / DSM 4304 / JCM 9628 / NBRC 100126 / VC-16) protein is Large ribosomal subunit protein eL24.